The sequence spans 346 residues: 4-hydroxy-3-methylbut-2-enyl diphosphate reductase (346 aa).

Position 19 (Cys19) interacts with [4Fe-4S] cluster. (2E)-4-hydroxy-3-methylbut-2-enyl diphosphate-binding residues include His48 and His84. Dimethylallyl diphosphate-binding residues include His48 and His84. Residues His48 and His84 each coordinate isopentenyl diphosphate. [4Fe-4S] cluster is bound at residue Cys106. His134 contributes to the (2E)-4-hydroxy-3-methylbut-2-enyl diphosphate binding site. Residue His134 coordinates dimethylallyl diphosphate. An isopentenyl diphosphate-binding site is contributed by His134. The active-site Proton donor is Glu136. Thr175 contributes to the (2E)-4-hydroxy-3-methylbut-2-enyl diphosphate binding site. Cys205 serves as a coordination point for [4Fe-4S] cluster. 4 residues coordinate (2E)-4-hydroxy-3-methylbut-2-enyl diphosphate: Ser233, Ser234, Asn235, and Ser278. Residues Ser233, Ser234, Asn235, and Ser278 each coordinate dimethylallyl diphosphate. Residues Ser233, Ser234, Asn235, and Ser278 each coordinate isopentenyl diphosphate.

It belongs to the IspH family. [4Fe-4S] cluster is required as a cofactor.

It catalyses the reaction isopentenyl diphosphate + 2 oxidized [2Fe-2S]-[ferredoxin] + H2O = (2E)-4-hydroxy-3-methylbut-2-enyl diphosphate + 2 reduced [2Fe-2S]-[ferredoxin] + 2 H(+). The catalysed reaction is dimethylallyl diphosphate + 2 oxidized [2Fe-2S]-[ferredoxin] + H2O = (2E)-4-hydroxy-3-methylbut-2-enyl diphosphate + 2 reduced [2Fe-2S]-[ferredoxin] + 2 H(+). The protein operates within isoprenoid biosynthesis; dimethylallyl diphosphate biosynthesis; dimethylallyl diphosphate from (2E)-4-hydroxy-3-methylbutenyl diphosphate: step 1/1. It participates in isoprenoid biosynthesis; isopentenyl diphosphate biosynthesis via DXP pathway; isopentenyl diphosphate from 1-deoxy-D-xylulose 5-phosphate: step 6/6. In terms of biological role, catalyzes the conversion of 1-hydroxy-2-methyl-2-(E)-butenyl 4-diphosphate (HMBPP) into a mixture of isopentenyl diphosphate (IPP) and dimethylallyl diphosphate (DMAPP). Acts in the terminal step of the DOXP/MEP pathway for isoprenoid precursor biosynthesis. This chain is 4-hydroxy-3-methylbut-2-enyl diphosphate reductase, found in Brucella melitensis biotype 1 (strain ATCC 23456 / CCUG 17765 / NCTC 10094 / 16M).